The sequence spans 841 residues: Probable outer membrane usher protein EcpC (841 aa).

The signal sequence occupies residues Met-1–Ala-29.

The protein belongs to the EcpC/MatD family.

In terms of biological role, part of the ecpRABCDE operon, which encodes the E.coli common pilus (ECP). ECP is found in both commensal and pathogenic strains and plays a dual role in early-stage biofilm development and host cell recognition. The polypeptide is Probable outer membrane usher protein EcpC (ecpC) (Escherichia coli O6:H1 (strain CFT073 / ATCC 700928 / UPEC)).